We begin with the raw amino-acid sequence, 487 residues long: Kynureninase 1 (487 aa).

Residues leucine 149, threonine 150, 177-180, serine 234, aspartate 263, histidine 266, and tyrosine 288 contribute to the pyridoxal 5'-phosphate site; that span reads FPSD. Lysine 289 carries the N6-(pyridoxal phosphate)lysine modification. Residues tryptophan 329 and asparagine 357 each coordinate pyridoxal 5'-phosphate.

The protein belongs to the kynureninase family. As to quaternary structure, homodimer. Requires pyridoxal 5'-phosphate as cofactor.

The protein localises to the cytoplasm. It carries out the reaction L-kynurenine + H2O = anthranilate + L-alanine + H(+). The catalysed reaction is 3-hydroxy-L-kynurenine + H2O = 3-hydroxyanthranilate + L-alanine + H(+). Its pathway is amino-acid degradation; L-kynurenine degradation; L-alanine and anthranilate from L-kynurenine: step 1/1. It functions in the pathway cofactor biosynthesis; NAD(+) biosynthesis; quinolinate from L-kynurenine: step 2/3. Functionally, catalyzes the cleavage of L-kynurenine (L-Kyn) and L-3-hydroxykynurenine (L-3OHKyn) into anthranilic acid (AA) and 3-hydroxyanthranilic acid (3-OHAA), respectively. This Emericella nidulans (strain FGSC A4 / ATCC 38163 / CBS 112.46 / NRRL 194 / M139) (Aspergillus nidulans) protein is Kynureninase 1 (bna5-1).